A 284-amino-acid chain; its full sequence is HTH-type transcriptional activator RhaR (284 aa).

Residues 181–279 (DMLMNALRAS…GVSPSAYRQR (99 aa)) form the HTH araC/xylS-type domain. DNA-binding regions (H-T-H motif) lie at residues 198-219 (EAFC…KEQT) and 246-269 (IGDI…HQAF).

In terms of assembly, binds DNA as a dimer.

It is found in the cytoplasm. Activates expression of the rhaSR operon in response to L-rhamnose. This is HTH-type transcriptional activator RhaR from Pectobacterium carotovorum subsp. carotovorum (strain PC1).